The following is a 250-amino-acid chain: Galectin-3 (250 aa).

The tract at residues 1 to 60 is disordered; the sequence is MADNFSLHDALSGSGNPNPQGWPGAWGNQPAGAGGYPGASYPGAYPGQAPPGAYPGQAPP. A2 carries the N-acetylalanine modification. S6 and S12 each carry phosphoserine. Tandem repeats lie at residues 36–44, 45–53, and 54–62. The tract at residues 36–109 is 8 X 9 AA tandem repeats of Y-P-G-X(3)-P-G-A; the sequence is YPGASYPGAY…AYPATGPYGA (74 aa). Residues 38–47 are compositionally biased toward low complexity; sequence GASYPGAYPG. Pro residues predominate over residues 48 to 60; it reads QAPPGAYPGQAPP. One copy of the 4; approximate repeat lies at 63–69; the sequence is YPGAPGA. The stretch at 70-78 is repeat 5; it reads YPGAPAPGV. The stretch at 79–88 is one 6; approximate repeat; sequence YPGPPSGPGA. Residues 89–100 form a 7; approximate repeat; the sequence is YPSSGQPSATGA. Residues 101–109 form an 8; approximate repeat; the sequence is YPATGPYGA. The Galectin domain occupies 118-248; it reads YNLPLPGGVV…DIDLTSASYT (131 aa). 181–187 contacts a beta-D-galactoside; the sequence is WGREERQ. S188 bears the Phosphoserine mark. Residues 226 to 241 carry the Nuclear export signal motif; the sequence is KKLNEISKLGISGDID.

In terms of assembly, probably forms homo- or heterodimers. Interacts with DMBT1. Interacts with CD6 and ALCAM. Forms a complex with the ITGA3, ITGB1 and CSPG4. Interacts with LGALS3BP, LYPD3, ZFTRAF1 and UACA. Interacts with TRIM16; this interaction mediates autophagy of damage endomembranes. Interacts with cargo receptor TMED10; the interaction mediates the translocation from the cytoplasm into the ERGIC (endoplasmic reticulum-Golgi intermediate compartment) and thereby secretion. In terms of tissue distribution, a major expression is found in the colonic epithelium. It is also abundant in the activated macrophages. Expressed in fetal membranes.

The protein resides in the cytoplasm. The protein localises to the nucleus. Its subcellular location is the secreted. Functionally, galactose-specific lectin which binds IgE. May mediate with the alpha-3, beta-1 integrin the stimulation by CSPG4 of endothelial cells migration. Together with DMBT1, required for terminal differentiation of columnar epithelial cells during early embryogenesis. In the nucleus: acts as a pre-mRNA splicing factor. Involved in acute inflammatory responses including neutrophil activation and adhesion, chemoattraction of monocytes macrophages, opsonization of apoptotic neutrophils, and activation of mast cells. Together with TRIM16, coordinates the recognition of membrane damage with mobilization of the core autophagy regulators ATG16L1 and BECN1 in response to damaged endomembranes. This chain is Galectin-3, found in Homo sapiens (Human).